The primary structure comprises 2602 residues: Filamin-B (2602 aa).

The actin-binding stretch occupies residues 1–239 (MPVTEKDLAE…VMTYLSQFPK (239 aa)). 2 Calponin-homology (CH) domains span residues 16-122 (KIQQ…LHYS) and 139-242 (QTPK…KAKL). Phosphothreonine is present on threonine 216. The segment at 244–267 (PGAPLKPKLNPKKARAYGRGIEPT) is disordered. 15 Filamin repeats span residues 249–347 (KPKL…EVSV), 349–446 (KAQG…VVQV), 447–543 (GEAC…EVQV), 544–636 (GPEA…MAFI), 640–736 (TGGY…RVNI), 737–839 (GQGS…RVKV), 840–938 (DPSH…TVGV), 939–1034 (AAPL…TVEA), 1035–1127 (SLPP…KADI), 1128–1222 (EMPF…RVKV), 1223–1322 (EPAV…KVAV), 1323–1415 (TEGC…RVPV), 1416–1511 (KDVV…KVKV), 1512–1608 (LPTY…RIRA), and 1609–1704 (TQTG…TVMA). The residue at position 519 (threonine 519) is a Phosphothreonine. Lysine 681 is subject to N6-acetyllysine. Serine 730 is modified (phosphoserine). Serine 886, serine 932, serine 983, and serine 1028 each carry phosphoserine. The interaction with FBLP1 stretch occupies residues 1128–1511 (EMPFDPSKVV…IPRSPFKVKV (384 aa)). Phosphothreonine is present on threonine 1307. Serine 1316 carries the post-translational modification Phosphoserine. Phosphoserine is present on residues serine 1433, asparagine 1474, serine 1505, and serine 1602. The tract at residues 1705-1728 (TDGEVTAVEEAPVNACPPGFRPWV) is hinge 1. 8 Filamin repeats span residues 1729–1813 (TEEA…SPLQ), 1816–1908 (VNYP…TAKI), 1919–1994 (KLGS…SIMV), 1997–2089 (SEIG…TVKI), 2091–2185 (GEGR…QFTV), 2188–2280 (LGEG…LVPV), 2282–2375 (APSD…KVRV), and 2379–2471 (GQAG…KAKV). N6-acetyllysine is present on lysine 1780. The interval 1862-2148 (SKAEISCIDN…RVTEAEIVPM (287 aa)) is interaction with the cytoplasmic tail of GP1BA. Positions 2060 to 2225 (SYFPTVPGVY…IWTREAGAGG (166 aa)) are interaction with FLNA 1. Residues serine 2083, serine 2107, and serine 2113 each carry the phosphoserine modification. The segment at 2130–2602 (SAHVTSPSGR…PGSPFHVTVP (473 aa)) is interaction with INPPL1. Serine 2369 and serine 2465 each carry phosphoserine. Residue lysine 2468 forms a Glycyl lysine isopeptide (Lys-Gly) (interchain with G-Cter in ISG15) linkage. The segment at 2472–2506 (TGQRLVSPGSANETSSILVESVTRSSTETCYSAIP) is hinge 2. The segment at 2472-2602 (TGQRLVSPGS…PGSPFHVTVP (131 aa)) is self-association site, tail. A phosphoserine mark is found at serine 2478, serine 2481, and serine 2492. A Filamin 24 repeat occupies 2507–2601 (KASSDASKVT…IPGSPFHVTV (95 aa)). Residues 2507–2602 (KASSDASKVT…PGSPFHVTVP (96 aa)) are interaction with FLNA 2. An N6-succinyllysine mark is found at lysine 2518 and lysine 2524. The residue at position 2576 (lysine 2576) is an N6-acetyllysine.

The protein belongs to the filamin family. As to quaternary structure, homodimer. Interacts with MICALL2. Interacts with RFLNA and RFLNB. Isoform 1 interacts with FBLP1, FLNA, FLNC, GP1BA, INPPL1, ITGB1A, PSEN1 and PSEN2. Isoform 3 interacts with ITGB1A, ITGB1D, ITGB3 and ITGB6. Interacts with MYOT and MYOZ1. Interacts with HBV capsid protein. Interacts with ASB2 isoform 1; the interaction targets FLNB for proteasomal degradation. Post-translationally, ISGylation prevents ability to interact with the upstream activators of the JNK cascade and inhibits IFNA-induced JNK signaling. In terms of processing, ubiquitination by a SCF-like complex containing ASB2 isoform 1 leads to proteasomal degradation which promotes muscle differentiation. As to expression, ubiquitous. Isoform 1 and isoform 2 are expressed in placenta, bone marrow, brain, umbilical vein endothelial cells (HUVEC), retina and skeletal muscle. Isoform 1 is predominantly expressed in prostate, uterus, liver, thyroid, stomach, lymph node, small intestine, spleen, skeletal muscle, kidney, placenta, pancreas, heart, lung, platelets, endothelial cells, megakaryocytic and erythroleukemic cell lines. Isoform 2 is predominantly expressed in spinal cord, platelet and Daudi cells. Also expressed in thyroid adenoma, neurofibrillary tangles (NFT), senile plaques in the hippocampus and cerebral cortex in Alzheimer disease (AD). Isoform 3 and isoform 6 are expressed predominantly in lung, heart, skeletal muscle, testis, spleen, thymus and leukocytes. Isoform 4 and isoform 5 are expressed in heart.

The protein localises to the cytoplasm. The protein resides in the cell cortex. It is found in the cytoskeleton. Its subcellular location is the stress fiber. It localises to the myofibril. The protein localises to the sarcomere. The protein resides in the z line. Connects cell membrane constituents to the actin cytoskeleton. May promote orthogonal branching of actin filaments and links actin filaments to membrane glycoproteins. Anchors various transmembrane proteins to the actin cytoskeleton. Interaction with FLNA may allow neuroblast migration from the ventricular zone into the cortical plate. Various interactions and localizations of isoforms affect myotube morphology and myogenesis. Isoform 6 accelerates muscle differentiation in vitro. In Homo sapiens (Human), this protein is Filamin-B (FLNB).